A 500-amino-acid polypeptide reads, in one-letter code: NAD(P)H-quinone oxidoreductase chain 4, chloroplastic (500 aa).

Transmembrane regions (helical) follow at residues 4–24 (FPWL…MLFL), 35–55 (YTIC…CYNF), 87–107 (IGTI…AFPV), 113–130 (LFHF…GSFS), 134–154 (LLLF…LLSM), 167–187 (FILY…GISL), 211–231 (IILY…IPLH), 242–262 (HYST…YGLV), 272–292 (AHSM…IYAA), 305–325 (IAYS…SITD), 330–350 (GAIL…FLAG), 386–406 (LALP…GIIT), 416–436 (ILII…LLSM), and 466–486 (ISSL…LALA).

Belongs to the complex I subunit 4 family.

Its subcellular location is the plastid. The protein localises to the chloroplast thylakoid membrane. The catalysed reaction is a plastoquinone + NADH + (n+1) H(+)(in) = a plastoquinol + NAD(+) + n H(+)(out). It carries out the reaction a plastoquinone + NADPH + (n+1) H(+)(in) = a plastoquinol + NADP(+) + n H(+)(out). This Aethionema grandiflorum (Persian stone-cress) protein is NAD(P)H-quinone oxidoreductase chain 4, chloroplastic.